Consider the following 438-residue polypeptide: Chromosomal replication initiator protein DnaA (438 aa).

The domain I, interacts with DnaA modulators stretch occupies residues 1 to 74 (MNEINKIWQK…SFYQITGSQV (74 aa)). Positions 74–100 (VEVKYIITGKEHETGLIEEKKQVIKKG) are domain II. Residues 101–317 (NLNPKYTFDT…GSLIKLCAYT (217 aa)) are domain III, AAA+ region. Gly145, Gly147, Lys148, and Thr149 together coordinate ATP. The domain IV, binds dsDNA stretch occupies residues 318–438 (SLTKVPISMD…DSIIKKVTGQ (121 aa)).

This sequence belongs to the DnaA family. Oligomerizes as a right-handed, spiral filament on DNA at oriC.

It is found in the cytoplasm. Its function is as follows. Plays an essential role in the initiation and regulation of chromosomal replication. ATP-DnaA binds to the origin of replication (oriC) to initiate formation of the DNA replication initiation complex once per cell cycle. Binds the DnaA box (a 9 base pair repeat at the origin) and separates the double-stranded (ds)DNA. Forms a right-handed helical filament on oriC DNA; dsDNA binds to the exterior of the filament while single-stranded (ss)DNA is stabiized in the filament's interior. The ATP-DnaA-oriC complex binds and stabilizes one strand of the AT-rich DNA unwinding element (DUE), permitting loading of DNA polymerase. After initiation quickly degrades to an ADP-DnaA complex that is not apt for DNA replication. Binds acidic phospholipids. This chain is Chromosomal replication initiator protein DnaA, found in Thermodesulfovibrio yellowstonii (strain ATCC 51303 / DSM 11347 / YP87).